Consider the following 240-residue polypeptide: Small ribosomal subunit protein uS2c (240 aa).

The protein belongs to the universal ribosomal protein uS2 family.

It is found in the plastid. The protein resides in the chloroplast. This Euglena gracilis protein is Small ribosomal subunit protein uS2c (rps2).